The chain runs to 478 residues: MPAPKSIIIVGSGVFGLSTAHAMSQNNEFASSKITLIDSWNFEPSGPSASAPNPSAANFDTSRIIRSDYSHRTYATLAREAQQKWKADWGADGRYRNQSIVMIGEGHSMKQPMKALESINYVKHAYAQSYERAGRNSDIVHILDSESAVWEALGLGTPDEASKAGPNASELRGYRNHNCGWAESGATMAWLRQKTIHSDRIDIHIGQVVGLRVCSDSPSESHVNAEPRVCGVILDDGSQLTADLTVLAAGAMTPRLLGSPTLCDVYSETVAYVQLTEMERRELVRREFPLIVNVARKIFAIGPDNQGFLKLARFSWSGYRDVQKFAGVDVGPRSQAAPQEEDGYGACGDLDQTKLSPDVESTLQDYRGFLRELFRSGDGGDLGGLRNIATRPFAQVRRCWYADTVSTDFIVDYHPAYGKSLFIATGGSDHAFKFLPVLGERICELILQSDNGKAGPSESIQELQRLWKFPGGDSHAKL.

A signal peptide spans 1 to 22 (MPAPKSIIIVGSGVFGLSTAHA). FAD-binding residues include Val14, Phe15, Asp38, Asn53, Ala57, Asn58, Arg63, and Ile64. Residues Asn97 and Asn167 are each glycosylated (N-linked (GlcNAc...) asparagine). Position 208 (Val208) interacts with FAD. Cys399 is modified (S-8alpha-FAD cysteine). Residues Phe432 and Lys433 each coordinate FAD.

It belongs to the MSOX/MTOX family. Dimer. It depends on FAD as a cofactor.

It functions in the pathway secondary metabolite biosynthesis. Its function is as follows. Nonribosomal peptide synthetase; part of the gene cluster that mediates the biosynthesis of imizoquins A to D, tripeptide-derived alkaloids that serve a protective role against oxidative stress that are essential for normal germination. ImqB is a canonical three-module NRPS that assembles the tripeptide backbone of the imizoquins via condensation of Trp, Tyr, and Leu-derived precursors. N-methylation by imqF and phenol oxidation by imqC, followed by cyclization via the FAD-dependent oxidase imqH carry out the three-step transformation of L-tyrosine into tetrahydroisoquinoline. Importantly, this sequence requires the presence of a free amine in the tyrosine moiety, indicating that isoquinoline formation occurs prior to peptide bond formation. The imidazolidin-4-one ring of imizoquins could form following additional oxidation of the methyl-derived bridgehead carbon by imqH. Lastly, O-methylation by imqG and leucine hydroxylation by imqE complete biosynthesis of the imizoquins. In Aspergillus flavus (strain ATCC 200026 / FGSC A1120 / IAM 13836 / NRRL 3357 / JCM 12722 / SRRC 167), this protein is Amino acid oxidase imqH.